The sequence spans 465 residues: Cysteine--tRNA ligase (465 aa).

Residue Cys-27 participates in Zn(2+) binding. The 'HIGH' region signature appears at 29-39 (PTVYDDAHLGH). Zn(2+)-binding residues include Cys-207, His-237, and Glu-241. Positions 269–273 (KMSKS) match the 'KMSKS' region motif. Lys-272 is an ATP binding site.

Belongs to the class-I aminoacyl-tRNA synthetase family. As to quaternary structure, monomer. Zn(2+) is required as a cofactor.

The protein resides in the cytoplasm. It carries out the reaction tRNA(Cys) + L-cysteine + ATP = L-cysteinyl-tRNA(Cys) + AMP + diphosphate. The sequence is that of Cysteine--tRNA ligase (cysS) from Helicobacter pylori (strain J99 / ATCC 700824) (Campylobacter pylori J99).